The following is a 293-amino-acid chain: Light-independent protochlorophyllide reductase iron-sulfur ATP-binding protein (293 aa).

Residues 10–15 and lysine 39 contribute to the ATP site; that span reads GIGKST. Serine 14 is a Mg(2+) binding site. [4Fe-4S] cluster-binding residues include cysteine 95 and cysteine 129. 180 to 181 provides a ligand contact to ATP; it reads NR.

It belongs to the NifH/BchL/ChlL family. Homodimer. Protochlorophyllide reductase is composed of three subunits; ChlL, ChlN and ChlB. Requires [4Fe-4S] cluster as cofactor.

It localises to the plastid. It is found in the chloroplast. It carries out the reaction chlorophyllide a + oxidized 2[4Fe-4S]-[ferredoxin] + 2 ADP + 2 phosphate = protochlorophyllide a + reduced 2[4Fe-4S]-[ferredoxin] + 2 ATP + 2 H2O. It participates in porphyrin-containing compound metabolism; chlorophyll biosynthesis (light-independent). Its function is as follows. Component of the dark-operative protochlorophyllide reductase (DPOR) that uses Mg-ATP and reduced ferredoxin to reduce ring D of protochlorophyllide (Pchlide) to form chlorophyllide a (Chlide). This reaction is light-independent. The L component serves as a unique electron donor to the NB-component of the complex, and binds Mg-ATP. The protein is Light-independent protochlorophyllide reductase iron-sulfur ATP-binding protein of Adiantum capillus-veneris (Maidenhair fern).